We begin with the raw amino-acid sequence, 192 residues long: Orotate phosphoribosyltransferase 2 (192 aa).

116–124 (EDIVTTGLS) contacts 5-phospho-alpha-D-ribose 1-diphosphate. Positions 120 and 148 each coordinate orotate.

It belongs to the purine/pyrimidine phosphoribosyltransferase family. PyrE subfamily. As to quaternary structure, homodimer. Mg(2+) serves as cofactor.

The catalysed reaction is orotidine 5'-phosphate + diphosphate = orotate + 5-phospho-alpha-D-ribose 1-diphosphate. Its pathway is pyrimidine metabolism; UMP biosynthesis via de novo pathway; UMP from orotate: step 1/2. Catalyzes the transfer of a ribosyl phosphate group from 5-phosphoribose 1-diphosphate to orotate, leading to the formation of orotidine monophosphate (OMP). The protein is Orotate phosphoribosyltransferase 2 of Mesorhizobium japonicum (strain LMG 29417 / CECT 9101 / MAFF 303099) (Mesorhizobium loti (strain MAFF 303099)).